The primary structure comprises 507 residues: ATP synthase subunit alpha, chloroplastic (507 aa).

170 to 177 (GDRQTGKT) is a binding site for ATP. Thr257 carries the post-translational modification Phosphothreonine.

It belongs to the ATPase alpha/beta chains family. As to quaternary structure, F-type ATPases have 2 components, CF(1) - the catalytic core - and CF(0) - the membrane proton channel. CF(1) has five subunits: alpha(3), beta(3), gamma(1), delta(1), epsilon(1). CF(0) has four main subunits: a, b, b' and c.

It localises to the plastid. The protein resides in the chloroplast thylakoid membrane. It carries out the reaction ATP + H2O + 4 H(+)(in) = ADP + phosphate + 5 H(+)(out). In terms of biological role, produces ATP from ADP in the presence of a proton gradient across the membrane. The alpha chain is a regulatory subunit. The chain is ATP synthase subunit alpha, chloroplastic from Capsella bursa-pastoris (Shepherd's purse).